A 298-amino-acid chain; its full sequence is Ethanolamine ammonia-lyase small subunit (298 aa).

Residues Val210, Glu231, and Cys261 each contribute to the adenosylcob(III)alamin site.

Belongs to the EutC family. In terms of assembly, the basic unit is a heterodimer which dimerizes to form tetramers. The heterotetramers trimerize; 6 large subunits form a core ring with 6 small subunits projecting outwards. Requires adenosylcob(III)alamin as cofactor.

Its subcellular location is the bacterial microcompartment. The catalysed reaction is ethanolamine = acetaldehyde + NH4(+). It functions in the pathway amine and polyamine degradation; ethanolamine degradation. Functionally, catalyzes the deamination of various vicinal amino-alcohols to oxo compounds. Allows this organism to utilize ethanolamine as the sole source of nitrogen and carbon in the presence of external vitamin B12. The sequence is that of Ethanolamine ammonia-lyase small subunit from Salmonella dublin (strain CT_02021853).